The chain runs to 393 residues: DNA/RNA-binding protein KIN17 (393 aa).

The segment at 28–50 adopts a C2H2-type zinc-finger fold; the sequence is CQMCQKQCRDENGFKCHCMSESH. Positions 51-160 are winged helix-turn-helix (wHTH); that stretch reads QRQLLLASEN…RQLELEKKKK (110 aa). Lys135 bears the N6,N6,N6-trimethyllysine; by METTL22; in vitro mark. An N6-methyllysine modification is found at Lys135. Residues 147-180 are a coiled coil; sequence ETIRRQLELEKKKKQDLDDEEKTAKFIEEQVRRG. The span at 209–224 shows a compositional bias: low complexity; sequence KGACSSSGATSSKSST. The disordered stretch occupies residues 209–260; sequence KGACSSSGATSSKSSTLGPSALKTIGSSASVKRKESSQSSTQSKEKKKKKSA. A coiled-coil region spans residues 250 to 277; sequence QSKEKKKKKSALDEIMEIEEEKKRTART. The interval 284–334 is C-terminal subdomain A; it reads EIIVKIITKKLGEKYHKKKAIVKEVIDKYTAVVKMIDSGDKLKLDQTHLET. The segment at 340 to 391 is C-terminal subdomain B; the sequence is GKRILVLNGGYRGNEGTLESINEKTFSATIVIETGPLKGRRVEGIQYEDISK.

It belongs to the KIN17 family. As to quaternary structure, associated with DNA polymerase alpha, RFC1 and cyclin A, in multiprotein DNA replication complexes. Also associates with replication origins at the G1/S phase boundary and throughout the S phase in vivo. (Microbial infection) Interacts with SV40 large T antigen. In terms of tissue distribution, ubiquitously expressed in all tissues examined, with highest levels in skeletal muscle, heart and testis. Differentially expressed in non-tumorigenic and tumorigenic cell lines. Highly expressed in proliferating epithelial keratinocyte cells in vitro (at protein level).

The protein localises to the nucleus. The protein resides in the cytoplasm. Involved in DNA replication and the cellular response to DNA damage. May participate in DNA replication factories and create a bridge between DNA replication and repair mediated by high molecular weight complexes. May play a role in illegitimate recombination and regulation of gene expression. May participate in mRNA processing. Binds, in vitro, to double-stranded DNA. Also shown to bind preferentially to curved DNA in vitro and in vivo. Binds via its C-terminal domain to RNA in vitro. The polypeptide is DNA/RNA-binding protein KIN17 (Homo sapiens (Human)).